Here is a 733-residue protein sequence, read N- to C-terminus: Methylmalonyl-CoA mutase large subunit (733 aa).

Over residues 1-10 the composition is skewed to acidic residues; sequence MRIPEFDDIE. A disordered region spans residues 1-22; the sequence is MRIPEFDDIELGAGGGPSGSAE. The (R)-methylmalonyl-CoA site is built by Tyr-78, Met-81, Thr-88, Arg-90, Tyr-92, and Ser-117. The cob(II)alamin site is built by Phe-120 and Ala-142. (R)-methylmalonyl-CoA contacts are provided by Thr-198 and Gln-200. The cob(II)alamin site is built by Val-209 and Arg-210. Positions 210, 247, 286, and 288 each coordinate (R)-methylmalonyl-CoA. Residues Gly-336, Glu-373, Ala-376, Gly-612, His-613, Asp-614, Arg-615, Ser-658, Leu-660, Gly-689, and Thr-712 each contribute to the cob(II)alamin site. Residues 600–732 enclose the B12-binding domain; the sequence is RPRILVAKMG…KRLAADLGHE (133 aa).

Belongs to the methylmalonyl-CoA mutase family. Heterodimer of an alpha and a beta chain. The cofactor is adenosylcob(III)alamin.

It catalyses the reaction (R)-methylmalonyl-CoA = succinyl-CoA. Its function is as follows. Catalyzes the isomerization of succinyl-CoA to methylmalonyl-CoA during synthesis of propionate from tricarboxylic acid-cycle intermediates. This conversion most likely represents an important source of building blocks for polyketide antibiotic biosynthesis. It is unable to catalyze the conversion of isobutyryl-CoA into N-butyryl-CoA. The chain is Methylmalonyl-CoA mutase large subunit (mutB) from Streptomyces virginiae (Streptomyces cinnamonensis).